The sequence spans 190 residues: Protein GrpE (190 aa).

Residues 1-18 show a composition bias toward polar residues; it reads MTETPNTSSEEIQTSEPS. The disordered stretch occupies residues 1 to 21; it reads MTETPNTSSEEIQTSEPSPDN.

Belongs to the GrpE family. Homodimer.

It localises to the cytoplasm. In terms of biological role, participates actively in the response to hyperosmotic and heat shock by preventing the aggregation of stress-denatured proteins, in association with DnaK and GrpE. It is the nucleotide exchange factor for DnaK and may function as a thermosensor. Unfolded proteins bind initially to DnaJ; upon interaction with the DnaJ-bound protein, DnaK hydrolyzes its bound ATP, resulting in the formation of a stable complex. GrpE releases ADP from DnaK; ATP binding to DnaK triggers the release of the substrate protein, thus completing the reaction cycle. Several rounds of ATP-dependent interactions between DnaJ, DnaK and GrpE are required for fully efficient folding. The sequence is that of Protein GrpE from Chlamydia trachomatis serovar L2b (strain UCH-1/proctitis).